The primary structure comprises 441 residues: Putative cytochrome P450 138 (441 aa).

Cys-388 contacts heme.

This sequence belongs to the cytochrome P450 family. Requires heme as cofactor.

This is Putative cytochrome P450 138 (cyp138) from Mycobacterium bovis (strain ATCC BAA-935 / AF2122/97).